The sequence spans 107 residues: Phosphoribosyl-ATP pyrophosphatase (107 aa).

This sequence belongs to the PRA-PH family.

It localises to the cytoplasm. The enzyme catalyses 1-(5-phospho-beta-D-ribosyl)-ATP + H2O = 1-(5-phospho-beta-D-ribosyl)-5'-AMP + diphosphate + H(+). Its pathway is amino-acid biosynthesis; L-histidine biosynthesis; L-histidine from 5-phospho-alpha-D-ribose 1-diphosphate: step 2/9. The sequence is that of Phosphoribosyl-ATP pyrophosphatase from Azoarcus sp. (strain BH72).